A 138-amino-acid polypeptide reads, in one-letter code: MLQPARRKYRKEQKGRNTGIATRGSSVAFGDFGLKCIDRGRLTARQIEAARRAISRHVKRGGRIWIRVFPDKPISQKPAEVRMGNGKGNPEYYVAEIQPGKIVFEIVGVPEELAREAFRLAAAKLPLRTTFVARMIGQ.

The span at M1 to Q13 shows a compositional bias: basic residues. The disordered stretch occupies residues M1–A21.

The protein belongs to the universal ribosomal protein uL16 family. In terms of assembly, part of the 50S ribosomal subunit.

In terms of biological role, binds 23S rRNA and is also seen to make contacts with the A and possibly P site tRNAs. This Albidiferax ferrireducens (strain ATCC BAA-621 / DSM 15236 / T118) (Rhodoferax ferrireducens) protein is Large ribosomal subunit protein uL16.